Here is a 786-residue protein sequence, read N- to C-terminus: Spermatogenesis-associated protein 20 (786 aa).

The signal sequence occupies residues Met1–Ala22. The tract at residues Ala23 to Val61 is disordered. At Ser649 the chain carries Phosphoserine.

The protein localises to the secreted. May play a role in fertility regulation. In Homo sapiens (Human), this protein is Spermatogenesis-associated protein 20 (SPATA20).